A 154-amino-acid chain; its full sequence is 6,7-dimethyl-8-ribityllumazine synthase (154 aa).

5-amino-6-(D-ribitylamino)uracil-binding positions include Phe-22, Ala-56 to Glu-58, and Ala-80 to Ile-82. Ala-85–Thr-86 contributes to the (2S)-2-hydroxy-3-oxobutyl phosphate binding site. His-88 functions as the Proton donor in the catalytic mechanism. A 5-amino-6-(D-ribitylamino)uracil-binding site is contributed by Phe-113. Arg-127 provides a ligand contact to (2S)-2-hydroxy-3-oxobutyl phosphate.

Belongs to the DMRL synthase family. In terms of assembly, forms an icosahedral capsid composed of 60 subunits, arranged as a dodecamer of pentamers.

It carries out the reaction (2S)-2-hydroxy-3-oxobutyl phosphate + 5-amino-6-(D-ribitylamino)uracil = 6,7-dimethyl-8-(1-D-ribityl)lumazine + phosphate + 2 H2O + H(+). It functions in the pathway cofactor biosynthesis; riboflavin biosynthesis; riboflavin from 2-hydroxy-3-oxobutyl phosphate and 5-amino-6-(D-ribitylamino)uracil: step 1/2. Its function is as follows. Catalyzes the formation of 6,7-dimethyl-8-ribityllumazine by condensation of 5-amino-6-(D-ribitylamino)uracil with 3,4-dihydroxy-2-butanone 4-phosphate. This is the penultimate step in the biosynthesis of riboflavin. This is 6,7-dimethyl-8-ribityllumazine synthase from Anoxybacillus flavithermus (strain DSM 21510 / WK1).